The primary structure comprises 532 residues: Zinc metalloproteinase nas-29 (532 aa).

The N-terminal stretch at 1-22 is a signal peptide; it reads MISKNTSFCGFLILVLATCMSA. N-linked (GlcNAc...) asparagine glycans are attached at residues asparagine 5, asparagine 27, asparagine 70, and asparagine 106. Positions 23 to 134 are excised as a propeptide; it reads QFVSNESIKL…NGESTDRTKR (112 aa). In terms of domain architecture, Peptidase M12A spans 135–335; sequence QAYLDNNYPA…HIMNQHYQCQ (201 aa). Cystine bridges form between cysteine 179–cysteine 334, cysteine 201–cysteine 222, cysteine 338–cysteine 358, cysteine 360–cysteine 369, cysteine 380–cysteine 408, and cysteine 435–cysteine 456. Histidine 230 provides a ligand contact to Zn(2+). Glutamate 231 is an active-site residue. Histidine 234 and histidine 240 together coordinate Zn(2+). Residues 330–370 form the EGF-like domain; sequence QHYQCQEKCPTQAPCQNGGFTNSRNCKVCKCPTGFGGAYCQ. One can recognise a CUB domain in the interval 380–494; sequence CGGYLNAEET…VSFEYSFVST (115 aa). Asparagine 503 carries an N-linked (GlcNAc...) asparagine glycan.

Zn(2+) serves as cofactor.

The protein resides in the secreted. In terms of biological role, metalloprotease. The chain is Zinc metalloproteinase nas-29 (nas-29) from Caenorhabditis elegans.